The following is a 527-amino-acid chain: Flagellar radial spoke protein 5 (527 aa).

The disordered stretch occupies residues 1 to 22 (MSEPGEEPVAAPAGPAPDPVLN). Positions 101-153 (RKWNELTIQAKQLEQEVAGLKGPDAEAKQAELENVKVQIADAEAAVAEVKQSF) form a coiled coil. 2 positions are modified to asymmetric dimethylarginine: Arg-191 and Arg-366.

It belongs to the aldo/keto reductase family. Post-translationally, asymmetrically dimethylated at Arg-191 and Arg-366 during flagellum resorption. Probably methylated by PRMT1.

It is found in the cytoplasm. The protein localises to the cytoskeleton. Its subcellular location is the flagellum axoneme. Flagellar radial spokes contribute to the regulation of dynein arm activity and thus the pattern of flagellar bending. They consist of a thin stalk, which is attached to the a subfiber of the outer doublet microtubule, and a bulbous head, which is attached to the stalk and appears to interact with the projections from the central pair of microtubules. In Chlamydomonas reinhardtii (Chlamydomonas smithii), this protein is Flagellar radial spoke protein 5.